A 198-amino-acid chain; its full sequence is Molybdenum cofactor guanylyltransferase (198 aa).

GTP contacts are provided by residues 14–16, K27, D73, and D103; that span reads LAG. Mg(2+) is bound at residue D103.

The protein belongs to the MobA family. In terms of assembly, monomer. Requires Mg(2+) as cofactor.

The protein resides in the cytoplasm. The enzyme catalyses Mo-molybdopterin + GTP + H(+) = Mo-molybdopterin guanine dinucleotide + diphosphate. Its function is as follows. Transfers a GMP moiety from GTP to Mo-molybdopterin (Mo-MPT) cofactor (Moco or molybdenum cofactor) to form Mo-molybdopterin guanine dinucleotide (Mo-MGD) cofactor. In Pseudomonas aeruginosa (strain LESB58), this protein is Molybdenum cofactor guanylyltransferase.